The sequence spans 253 residues: uncharacterized protein (253 aa).

2 consecutive EamA domains span residues methionine 1–leucine 97 and phenylalanine 116–leucine 237. Helical transmembrane passes span phenylalanine 2–leucine 22, isoleucine 28–tyrosine 48, glutamate 53–leucine 73, threonine 80–glycine 100, isoleucine 101–phenylalanine 121, alanine 138–phenylalanine 158, isoleucine 162–leucine 182, and glycine 214–isoleucine 234.

This sequence belongs to the EamA transporter family.

Its subcellular location is the cell membrane. This is an uncharacterized protein from Acidianus ambivalens (Desulfurolobus ambivalens).